Reading from the N-terminus, the 387-residue chain is Paralemmin-1 (387 aa).

Met-1 is modified (N-acetylmethionine). Residues 7–104 adopt a coiled-coil conformation; sequence ETISQQERLQ…IEELENADTL (98 aa). Disordered regions lie at residues 22–78 and 98–133; these read RRRQ…QEDE and LENA…DRKA. Composition is skewed to basic and acidic residues over residues 25–41 and 69–78; these read QAEV…DRRQ and DMRKQMQEDE. Ser-116 carries the phosphoserine modification. The span at 116-125 shows a compositional bias: pro residues; sequence SPGPVVPAPC. 2 positions are modified to phosphothreonine: Thr-142 and Thr-146. Ser-163 is modified (phosphoserine). Thr-244 is subject to Phosphothreonine. The residue at position 246 (Ser-246) is a Phosphoserine. Disordered stretches follow at residues 246 to 297 and 334 to 378; these read SEAG…QEPP and AAEP…DMKK. The span at 258–273 shows a compositional bias: basic and acidic residues; sequence GPSEEVVRTTPSRREI. A compositionally biased stretch (low complexity) spans 286–297; that stretch reads GPPGIQPGQEPP. Residues Ser-346 and Ser-369 each carry the phosphoserine modification. Residues Cys-381 and Cys-383 are each lipidated (S-palmitoyl cysteine). At Cys-384 the chain carries Cysteine methyl ester. Cys-384 carries S-farnesyl cysteine lipidation. The propeptide at 385-387 is removed in mature form; that stretch reads SIM.

The protein belongs to the paralemmin family. In terms of assembly, interacts with dopamine receptor DRD3. In terms of processing, phosphorylated.

It is found in the cell membrane. The protein localises to the cell projection. Its subcellular location is the filopodium membrane. The protein resides in the axon. It localises to the dendrite. It is found in the dendritic spine. The protein localises to the basolateral cell membrane. Its subcellular location is the apicolateral cell membrane. Involved in plasma membrane dynamics and cell process formation. Necessary for axonal and dendritic filopodia induction, for dendritic spine maturation and synapse formation in a palmitoylation-dependent manner. This chain is Paralemmin-1 (PALM), found in Sus scrofa (Pig).